Consider the following 297-residue polypeptide: Thiosulfate sulfurtransferase (297 aa).

Position 14 is an N6-acetyllysine; alternate (lysine 14). At lysine 14 the chain carries N6-succinyllysine; alternate. The Rhodanese 1 domain maps to valine 25–serine 143. An O-linked (GlcNAc) serine glycan is attached at serine 35. Residue serine 38 is modified to Phosphoserine. Residue lysine 136 is modified to N6-acetyllysine; alternate. Lysine 136 bears the N6-succinyllysine; alternate mark. The hinge stretch occupies residues glutamate 144 to arginine 159. Lysine 163 bears the N6-acetyllysine mark. A Rhodanese 2 domain is found at glutamine 173 to arginine 288. At lysine 175 the chain carries N6-acetyllysine; alternate. Residue lysine 175 is modified to N6-succinyllysine; alternate. Arginine 187 contacts substrate. Lysine 224 is subject to N6-acetyllysine; alternate. At lysine 224 the chain carries N6-succinyllysine; alternate. An N6-acetyllysine modification is found at lysine 236. Lysine 237 bears the N6-acetyllysine; alternate mark. The residue at position 237 (lysine 237) is an N6-succinyllysine; alternate. Residue cysteine 248 is the Cysteine persulfide intermediate of the active site. Substrate is bound at residue lysine 250.

As to quaternary structure, monomer. Expressed in numerous tissues.

Its subcellular location is the mitochondrion matrix. The catalysed reaction is thiosulfate + hydrogen cyanide = thiocyanate + sulfite + 2 H(+). Its function is as follows. Together with MRPL18, acts as a mitochondrial import factor for the cytosolic 5S rRNA. Only the nascent unfolded cytoplasmic form is able to bind to the 5S rRNA. Involved in the formation of iron-sulfur complexes, cyanide detoxification or modification of sulfur-containing enzymes. Other thiol compounds, besides cyanide, can act as sulfur ion acceptors. Also has weak mercaptopyruvate sulfurtransferase (MST) activity. The sequence is that of Thiosulfate sulfurtransferase (Tst) from Rattus norvegicus (Rat).